The following is a 407-amino-acid chain: Monooxygenase 2 (407 aa).

Belongs to the 3-hydroxybenzoate 6-hydroxylase family. In terms of assembly, monomer. Requires FAD as cofactor. In terms of tissue distribution, expressed in seeds, seedlings, roots, leaves, flowers, pollen and siliques.

This Arabidopsis thaliana (Mouse-ear cress) protein is Monooxygenase 2.